We begin with the raw amino-acid sequence, 334 residues long: Ventral anterior homeobox 1 (334 aa).

Positions 1–34 (MFGKPDKMDVRCHSDAEAARVSKNAHKESRESKG) are enriched in basic and acidic residues. A disordered region spans residues 1 to 41 (MFGKPDKMDVRCHSDAEAARVSKNAHKESRESKGAEGNLPA). Residues 100 to 159 (PKRTRTSFTAEQLYRLEMEFQRCQYVVGRERTELARQLNLSETQVKVWFQNRRTKQKKDQ) constitute a DNA-binding region (homeobox). Disordered stretches follow at residues 234-263 (PGPA…GLHA) and 314-334 (SAFE…KALD). Residues 323 to 334 (NNKEGAEKKALD) are compositionally biased toward basic and acidic residues.

Belongs to the EMX homeobox family.

It is found in the nucleus. Its function is as follows. Transcription factor that may function in dorsoventral specification of the forebrain. Required for axon guidance and major tract formation in the developing forebrain. May contribute to the differentiation of the neuroretina, pigmented epithelium and optic stalk. The sequence is that of Ventral anterior homeobox 1 (VAX1) from Homo sapiens (Human).